Here is a 245-residue protein sequence, read N- to C-terminus: 1-(5-phosphoribosyl)-5-[(5-phosphoribosylamino)methylideneamino] imidazole-4-carboxamide isomerase (245 aa).

The Proton acceptor role is filled by D7. The active-site Proton donor is the D129.

It belongs to the HisA/HisF family.

Its subcellular location is the cytoplasm. It catalyses the reaction 1-(5-phospho-beta-D-ribosyl)-5-[(5-phospho-beta-D-ribosylamino)methylideneamino]imidazole-4-carboxamide = 5-[(5-phospho-1-deoxy-D-ribulos-1-ylimino)methylamino]-1-(5-phospho-beta-D-ribosyl)imidazole-4-carboxamide. It participates in amino-acid biosynthesis; L-histidine biosynthesis; L-histidine from 5-phospho-alpha-D-ribose 1-diphosphate: step 4/9. The chain is 1-(5-phosphoribosyl)-5-[(5-phosphoribosylamino)methylideneamino] imidazole-4-carboxamide isomerase from Salmonella choleraesuis (strain SC-B67).